The following is a 160-amino-acid chain: SsrA-binding protein (160 aa).

The disordered stretch occupies residues 131–160 (KKEFDKRHTEKERDSDREIQRAMRTKGKDD).

Belongs to the SmpB family.

Its subcellular location is the cytoplasm. In terms of biological role, required for rescue of stalled ribosomes mediated by trans-translation. Binds to transfer-messenger RNA (tmRNA), required for stable association of tmRNA with ribosomes. tmRNA and SmpB together mimic tRNA shape, replacing the anticodon stem-loop with SmpB. tmRNA is encoded by the ssrA gene; the 2 termini fold to resemble tRNA(Ala) and it encodes a 'tag peptide', a short internal open reading frame. During trans-translation Ala-aminoacylated tmRNA acts like a tRNA, entering the A-site of stalled ribosomes, displacing the stalled mRNA. The ribosome then switches to translate the ORF on the tmRNA; the nascent peptide is terminated with the 'tag peptide' encoded by the tmRNA and targeted for degradation. The ribosome is freed to recommence translation, which seems to be the essential function of trans-translation. In Stutzerimonas stutzeri (strain A1501) (Pseudomonas stutzeri), this protein is SsrA-binding protein.